A 915-amino-acid polypeptide reads, in one-letter code: DNA repair-scaffolding protein (915 aa).

The span at 1 to 15 shows a compositional bias: basic residues; that stretch reads MPRGSRARGSKRKRS. Disordered stretches follow at residues 1–30 and 56–114; these read MPRG…RPLQ and FQNT…EDKT. Residues 56–65 show a composition bias toward polar residues; it reads FQNTSGNPSL. Residues 67 to 85 are compositionally biased toward basic and acidic residues; sequence AEEKTITEKHLELCPRPKQ. Over residues 86–107 the composition is skewed to polar residues; it reads ETTTSKSTSGLTDITWSSSGSD. The segment at 151–450 is necessary for interaction with RAD51; that stretch reads EISDCASCAS…GTAWTHGHKE (300 aa).

Found in a complex, at least composed of BLM, RAD51 and SPIDR; the complex formation is mediated by SPIDR. Interacts (via C-terminal region) with BLM; the interaction is direct. Interacts with RAD51; the interaction is direct. Interacts (via the C-terminal region) with FIGNL1 (via N-terminal one-half region); the interaction is direct.

Its subcellular location is the nucleus. Functionally, plays a role in DNA double-strand break (DBS) repair via homologous recombination (HR). Serves as a scaffolding protein that helps to promote the recruitment of DNA-processing enzymes like the helicase BLM and recombinase RAD51 to site of DNA damage, and hence contributes to maintain genomic integrity. This Homo sapiens (Human) protein is DNA repair-scaffolding protein (SPIDR).